Reading from the N-terminus, the 404-residue chain is Dihydrosphingosine 1-phosphate phosphatase YSR3 (404 aa).

The Lumenal portion of the chain corresponds to 1–86; the sequence is MTIIQTVTEL…PFRDVYFKYT (86 aa). Asn62 is a glycosylation site (N-linked (GlcNAc...) asparagine). A helical transmembrane segment spans residues 87–107; it reads SLMGSHMFYVIVLPMPVWLGY. Over 108 to 113 the chain is Cytoplasmic; it reads RDLTRD. Residues 114-134 form a helical membrane-spanning segment; that stretch reads MIYVLGYSIYLSGYLKDYWCL. The interval 129 to 137 is phosphatase sequence motif I; that stretch reads KDYWCLPRP. Topologically, residues 135–154 are lumenal; the sequence is PRPKSPPVDRITLSEYTTKE. The helical transmembrane segment at 155 to 176 threads the bilayer; it reads YGAPSSHSANATAVSLLFFWRI. Residues 158–161 form a phosphatase sequence motif II region; that stretch reads PSSH. The Proton donor role is filled by His161. The Cytoplasmic segment spans residues 177–182; the sequence is CLSDTL. Residues 183–203 form a helical membrane-spanning segment; that stretch reads VWPTKLLLLSLVIFYYLTLVF. At 204–215 the chain is on the lumenal side; the sequence is GRVYCGMHGMLD. The interval 204–215 is phosphatase sequence motif III; that stretch reads GRVYCGMHGMLD. Catalysis depends on His211, which acts as the Nucleophile. A helical transmembrane segment spans residues 216–236; it reads LFSGAAVGAICFFIRIWVVHA. Residues 237 to 241 lie on the Cytoplasmic side of the membrane; sequence LRNFQ. The chain crosses the membrane as a helical span at residues 242-262; that stretch reads IGEHLWFPLLSVAWGLFILFN. Residues 263–319 lie on the Lumenal side of the membrane; sequence HVRPIDECPCFEDSVAFIGVVSGLDCSDWLTERYGWNLVCSRYASCGSKVFLRPLVG. The helical transmembrane segment at 320 to 340 threads the bilayer; the sequence is VASVIVWKDVISKTAVYTLLI. At 341–379 the chain is on the cytoplasmic side; sequence KLLRFHDDRSEKVHFHNETSEEEECLLYSGVSKVEIVGR. Residues 380-400 traverse the membrane as a helical segment; sequence FLIYAGIPTTVFLLCPVFFTW. Residues 401–404 are Lumenal-facing; sequence TNLR.

Belongs to the type 2 lipid phosphate phosphatase family.

It is found in the endoplasmic reticulum membrane. It catalyses the reaction sphinganine 1-phosphate + H2O = sphinganine + phosphate. In terms of biological role, dihydrosphingosine 1-phosphate phosphatase required for efficient ceramide synthesis from exogenous sphingoid bases. Involved in endocytosis and calcium-mediated signaling. This Saccharomyces cerevisiae (strain ATCC 204508 / S288c) (Baker's yeast) protein is Dihydrosphingosine 1-phosphate phosphatase YSR3.